A 348-amino-acid chain; its full sequence is Uroporphyrinogen decarboxylase (348 aa).

Residues 27 to 31 (RQAGR), F46, D76, Y152, S207, and H320 each bind substrate.

This sequence belongs to the uroporphyrinogen decarboxylase family. As to quaternary structure, homodimer.

The protein localises to the cytoplasm. The enzyme catalyses uroporphyrinogen III + 4 H(+) = coproporphyrinogen III + 4 CO2. It participates in porphyrin-containing compound metabolism; protoporphyrin-IX biosynthesis; coproporphyrinogen-III from 5-aminolevulinate: step 4/4. Catalyzes the decarboxylation of four acetate groups of uroporphyrinogen-III to yield coproporphyrinogen-III. The polypeptide is Uroporphyrinogen decarboxylase (Bacillus anthracis).